Consider the following 326-residue polypeptide: Ornithine carbamoyltransferase (326 aa).

Carbamoyl phosphate contacts are provided by residues 57-60 (STRT), Gln84, Arg108, and 135-138 (HPTQ). Residues Asn169, Asp233, and 237–238 (SM) contribute to the L-ornithine site. 275–276 (CL) contributes to the carbamoyl phosphate binding site.

Belongs to the aspartate/ornithine carbamoyltransferase superfamily. OTCase family.

It localises to the cytoplasm. It carries out the reaction carbamoyl phosphate + L-ornithine = L-citrulline + phosphate + H(+). It functions in the pathway amino-acid biosynthesis; L-arginine biosynthesis; L-arginine from L-ornithine and carbamoyl phosphate: step 1/3. In terms of biological role, reversibly catalyzes the transfer of the carbamoyl group from carbamoyl phosphate (CP) to the N(epsilon) atom of ornithine (ORN) to produce L-citrulline. This is Ornithine carbamoyltransferase from Escherichia coli O6:K15:H31 (strain 536 / UPEC).